The chain runs to 241 residues: ATP synthase subunit a (241 aa).

5 consecutive transmembrane segments (helical) span residues 30–50 (GQVFLSSWILIGILLAVVLVG), 89–109 (LPFIGTLFLFIFVSNWGGALI), 128–148 (INTTVAMALLVSLAYFYAGLS), 193–213 (LAVGVLVYLVPLIVPLPVMLL), and 214–234 (GLFTSAIQALIFATLASFYIG).

The protein belongs to the ATPase A chain family. F-type ATPases have 2 components, CF(1) - the catalytic core - and CF(0) - the membrane proton channel. CF(1) has five subunits: alpha(3), beta(3), gamma(1), delta(1), epsilon(1). CF(0) has four main subunits: a, b, b' and c.

It localises to the cellular thylakoid membrane. In terms of biological role, key component of the proton channel; it plays a direct role in the translocation of protons across the membrane. This is ATP synthase subunit a from Synechococcus sp. (strain CC9605).